The sequence spans 335 residues: Beta-ketoacyl-[acyl-carrier-protein] synthase III (335 aa).

Active-site residues include Cys120 and His261. Residues 262–266 (QANER) are ACP-binding. Residue Asn291 is part of the active site.

The protein belongs to the thiolase-like superfamily. FabH family. Homodimer.

The protein resides in the cytoplasm. It catalyses the reaction malonyl-[ACP] + acetyl-CoA + H(+) = 3-oxobutanoyl-[ACP] + CO2 + CoA. It functions in the pathway lipid metabolism; fatty acid biosynthesis. Its function is as follows. Catalyzes the condensation reaction of fatty acid synthesis by the addition to an acyl acceptor of two carbons from malonyl-ACP. Catalyzes the first condensation reaction which initiates fatty acid synthesis and may therefore play a role in governing the total rate of fatty acid production. Possesses both acetoacetyl-ACP synthase and acetyl transacylase activities. Its substrate specificity determines the biosynthesis of branched-chain and/or straight-chain of fatty acids. In Chlamydia pneumoniae (Chlamydophila pneumoniae), this protein is Beta-ketoacyl-[acyl-carrier-protein] synthase III.